The primary structure comprises 249 residues: Microvitellogenin (249 aa).

An N-terminal signal peptide occupies residues 1-17; that stretch reads MLRTTVVLLTLAAIAFA.

Functionally, small vitellogenic protein found in females. It is synthesized in the fat body, secreted into the hemolymph, and taken up by developing oocytes. In Manduca sexta (Tobacco hawkmoth), this protein is Microvitellogenin (MVG).